A 751-amino-acid chain; its full sequence is MYKDLKFPVLIVHRDIKADTVAGERVRGIAHELEQDGFSILSTASSAEGRIVASTHHGLACILVAAEGAGENQRLLQDVVELIRVARVRAPQLPIFALGEQVTIENAPAESMADLHQLRGILYLFEDTVPFLARQVARAARNYLAGLLPPFFRALVEHTAQSNYSWHTPGHGGGVAYRKSPVGQAFHQFFGENTLRSDLSVSVPELGSLLDHTGPLAEAEDRAARNFGADHTFFVINGTSTANKIVWHSMVGREDLVLVDRNCHKSILHSIIMTGAIPLYLTPERNELGIIGPIPLSEFSKQSIAAKIAASPLARGREPKVKLAVVTNSTYDGLCYNAELIKQTLGDSVEVLHFDEAWYAYAAFHEFYDGRYGMGTSRSEEGPLVFATHSTHKMLAAFSQASMIHVQDGGTRKLDVARFNEAFMMHISTSPQYGIIASLDVASAMMEGPAGRSLIQETFDEALSFRRALANVRQNLDRNDWWFGVWQPEQVEGTDQVGTHDWVLEPSADWHGFGDIAEDYVLLDPIKVTLTTPGLSAGGKLSEQGIPAAIVSRFLWERGLVVEKTGLYSFLVLFSMGITKGKWSTLVTELLEFKRCYDANLPLLDVLPSVAQAGGKRYNGVGLRDLSDAMHASYRDNATAKAMKRMYTVLPEVAMRPSEAYDKLVRGEVEAVPIARLEGRIAAVMLVPYPPGIPLIMPGERFTEATRSILDYLEFARTFERAFPGFDSDVHGLQHQDGPSGRCYTVECIKE.

It belongs to the Orn/Lys/Arg decarboxylase class-I family. Homodecamer.

It carries out the reaction L-lysine + H(+) = cadaverine + CO2. Plays an essential role in lysine utilization by acting as a lysine decarboxylase. The protein is Lysine decarboxylase LdcA of Pseudomonas aeruginosa (strain ATCC 15692 / DSM 22644 / CIP 104116 / JCM 14847 / LMG 12228 / 1C / PRS 101 / PAO1).